The primary structure comprises 374 residues: Dual-specificity RNA methyltransferase RlmN (374 aa).

Residue glutamate 91 is the Proton acceptor of the active site. A Radical SAM core domain is found at 97–340; it reads EDDRGTLCIS…TTVRKTRGDD (244 aa). Cysteine 104 and cysteine 345 form a disulfide bridge. [4Fe-4S] cluster is bound by residues cysteine 111, cysteine 115, and cysteine 118. Residues 165–166, serine 197, 219–221, and asparagine 302 each bind S-adenosyl-L-methionine; these read GE and SLH. Cysteine 345 (S-methylcysteine intermediate) is an active-site residue.

It belongs to the radical SAM superfamily. RlmN family. The cofactor is [4Fe-4S] cluster.

Its subcellular location is the cytoplasm. The enzyme catalyses adenosine(2503) in 23S rRNA + 2 reduced [2Fe-2S]-[ferredoxin] + 2 S-adenosyl-L-methionine = 2-methyladenosine(2503) in 23S rRNA + 5'-deoxyadenosine + L-methionine + 2 oxidized [2Fe-2S]-[ferredoxin] + S-adenosyl-L-homocysteine. It carries out the reaction adenosine(37) in tRNA + 2 reduced [2Fe-2S]-[ferredoxin] + 2 S-adenosyl-L-methionine = 2-methyladenosine(37) in tRNA + 5'-deoxyadenosine + L-methionine + 2 oxidized [2Fe-2S]-[ferredoxin] + S-adenosyl-L-homocysteine. Its function is as follows. Specifically methylates position 2 of adenine 2503 in 23S rRNA and position 2 of adenine 37 in tRNAs. m2A2503 modification seems to play a crucial role in the proofreading step occurring at the peptidyl transferase center and thus would serve to optimize ribosomal fidelity. The sequence is that of Dual-specificity RNA methyltransferase RlmN from Acidovorax sp. (strain JS42).